Reading from the N-terminus, the 1244-residue chain is Protein MMS22-like (1244 aa).

It belongs to the MMS22 family. MMS22L subfamily. As to quaternary structure, component of the MMS22L-TONSL complex, a complex at least composed of MMS22L and TONSL/NFKBIL2. Interacts with RAD51; interaction is direct. Post-translationally, degraded by the ubiquitin-proteasome system upon replication stress.

The protein resides in the nucleus. It localises to the chromosome. Its function is as follows. Component of the MMS22L-TONSL complex, a complex that promotes homologous recombination-mediated repair of double-strand breaks (DSBs) at stalled or collapsed replication forks. The MMS22L-TONSL complex is required to maintain genome integrity during DNA replication. It mediates the assembly of RAD51 filaments on single-stranded DNA (ssDNA): the MMS22L-TONSL complex is recruited to DSBs following histone replacement by histone chaperones and eviction of the replication protein A complex (RPA/RP-A) from DSBs. Following recruitment to DSBs, the TONSL-MMS22L complex promotes recruitment of RAD51 filaments and subsequent homologous recombination. Within the complex, MMS22L acts by binding ssDNA. The sequence is that of Protein MMS22-like (MMS22L) from Bos taurus (Bovine).